Here is a 1191-residue protein sequence, read N- to C-terminus: MDGVGKSVKLCGGPIGYIYATPKCSVPVDELAILAAKSNDCDDAVLPLVAGLTVESDFVWNVAAVAGTKTTGLGSGGTTLKLVPTHYHPCVFVFYGGDCIKPCTKAPNLTKACDLARERFGYSAYSSPAPTAFETTGQQICEALEMDAQNVMLYLVVTELFKEVIYLCNSFLHFGGSDVVTINNADVRRIPIYPLHLVLPDFNRITNEPFSEKPRALGEGAIMPKAFYNDSLCRLLHGYVLSTTAVGLRVRNIDAIARGAAHLCFDENHEGTLLPADTTFTAFTPAAETTKGQSKMGKREGSDVSGGGYERRTASLMASDATLAIENVISASVYEDPIPDVNKWPIYCNPVGYADRIEALSAYMARVAGLVGAMVFSSNSVIYMTEVGEAGSTEGKETSTTAPSFYRFFQIAAPHLSANPLVDRDGKPVSGENLSKSTSASQSEYSLDYLILACGFCPQLLARFLFYLERCDGGAKACHHDLDTVKFVSSAIDADMPCELCDKTSRIYCAHTTIKRLVYRLPKFGYQMRGAMGLFGAMTNNYCDVNALGSYAQFSTLKRSEGEASRSVMQDTYRLTVERMMKALEKEGLLTCDDPTNMASADANIRDGNSFIRAISTMKNIIESEASQLMRNLTEIREYNIREGLGDANHTLSLAVEPYASGICPVLAFLSRRTIIAVVQDMALSQCSIVMQGQQVEARNFRTQFQAVLKRRVLELQNAGFITSKTITVTLEDQQICVPDPSKSQYDSVISNMEGDLVKVTVEIFRELKVKNKVLFGGGIAGAASEATKSRLAGMVEAYQRPTKTMHVLNGPLGFAVKRYHTLLFPDVKMPNGATPNALWFWILLLRNQLPAGILSKEEEDKSLFIKKFTKSYADMNYINISPTCFGDLAQFYLANTILKYCSHKHFFINTISALVAVSRRPRDPAIVLPWIERPITKGQDVAPAAQQLIASMSDHKDIWCATFSSTNLVGSIMTTKPFVVIGISISKYHGMAGSTKVFQSGNWGNIMGGRNVCSLMSFDRTHRYVMTCPRVGFVAEQPIFSSGIKETTLIDRVRMVLSEESAAPHAAVYMLALKMVGDRVRQMELEDWMEITNDEYISSLIDELNKQVEEAEGGWNADAAMTLAKEMVNMAMSIPTDGPTFDFDACDENLEGHADGQTISETNLKRPNMNVFDLEPIPEKRVPVLSVDML.

The segment at 288 to 307 (ETTKGQSKMGKREGSDVSGG) is disordered. A zinc finger spans residues 498–511 (CELCDKTSRIYCAH). Positions 841–842 (FW) match the Required for filament formation motif. The segment at 1166-1191 (KRPNMNVFDLEPIPEKRVPVLSVDML) is required for nuclear localization.

It belongs to the herpesviridae major DNA-binding protein family. In terms of assembly, homooligomers. Forms double-helical filaments necessary for the formation of replication compartments within the host nucleus. Interacts with the origin-binding protein. Interacts with the helicase primase complex; this interaction stimulates primer synthesis activity of the helicase-primase complex. Interacts with the DNA polymerase. Interacts with the alkaline exonuclease; this interaction increases its nuclease processivity.

It is found in the host nucleus. Its function is as follows. Plays several crucial roles in viral infection. Participates in the opening of the viral DNA origin to initiate replication by interacting with the origin-binding protein. May disrupt loops, hairpins and other secondary structures present on ssDNA to reduce and eliminate pausing of viral DNA polymerase at specific sites during elongation. Promotes viral DNA recombination by performing strand-transfer, characterized by the ability to transfer a DNA strand from a linear duplex to a complementary single-stranded DNA circle. Can also catalyze the renaturation of complementary single strands. Additionally, reorganizes the host cell nucleus, leading to the formation of prereplicative sites and replication compartments. This process is driven by the protein which can form double-helical filaments in the absence of DNA. The polypeptide is Major DNA-binding protein (Gallid herpesvirus 2 (strain Chicken/Md5/ATCC VR-987) (GaHV-2)).